Here is a 117-residue protein sequence, read N- to C-terminus: Holo-[acyl-carrier-protein] synthase (117 aa).

Residues Asp8 and Glu59 each contribute to the Mg(2+) site.

Belongs to the P-Pant transferase superfamily. AcpS family. Requires Mg(2+) as cofactor.

The protein localises to the cytoplasm. It carries out the reaction apo-[ACP] + CoA = holo-[ACP] + adenosine 3',5'-bisphosphate + H(+). Functionally, transfers the 4'-phosphopantetheine moiety from coenzyme A to a Ser of acyl-carrier-protein. This is Holo-[acyl-carrier-protein] synthase from Staphylococcus carnosus (strain TM300).